The chain runs to 388 residues: Biotin synthase (388 aa).

The region spanning 47-277 (WFGRRVKLNY…DVEVRIAGGR (231 aa)) is the Radical SAM core domain. 3 residues coordinate [4Fe-4S] cluster: cysteine 65, cysteine 69, and cysteine 72. [2Fe-2S] cluster is bound by residues cysteine 109, cysteine 142, cysteine 202, and arginine 272. A disordered region spans residues 335–371 (APAGGCGSEQSAGCGSHEGGGACGSAPAPRTDEARTD).

The protein belongs to the radical SAM superfamily. Biotin synthase family. As to quaternary structure, homodimer. [4Fe-4S] cluster serves as cofactor. [2Fe-2S] cluster is required as a cofactor.

The enzyme catalyses (4R,5S)-dethiobiotin + (sulfur carrier)-SH + 2 reduced [2Fe-2S]-[ferredoxin] + 2 S-adenosyl-L-methionine = (sulfur carrier)-H + biotin + 2 5'-deoxyadenosine + 2 L-methionine + 2 oxidized [2Fe-2S]-[ferredoxin]. Its pathway is cofactor biosynthesis; biotin biosynthesis; biotin from 7,8-diaminononanoate: step 2/2. In terms of biological role, catalyzes the conversion of dethiobiotin (DTB) to biotin by the insertion of a sulfur atom into dethiobiotin via a radical-based mechanism. This Streptomyces avermitilis (strain ATCC 31267 / DSM 46492 / JCM 5070 / NBRC 14893 / NCIMB 12804 / NRRL 8165 / MA-4680) protein is Biotin synthase.